The following is an 88-amino-acid chain: Small ribosomal subunit protein uS17 (88 aa).

The protein belongs to the universal ribosomal protein uS17 family. As to quaternary structure, part of the 30S ribosomal subunit.

One of the primary rRNA binding proteins, it binds specifically to the 5'-end of 16S ribosomal RNA. The polypeptide is Small ribosomal subunit protein uS17 (Marinobacter nauticus (strain ATCC 700491 / DSM 11845 / VT8) (Marinobacter aquaeolei)).